Consider the following 108-residue polypeptide: Large ribosomal subunit protein P1 (108 aa).

Positions Pro67–Gly108 are disordered. The span at Lys84 to Ala99 shows a compositional bias: acidic residues.

It belongs to the eukaryotic ribosomal protein P1/P2 family. In terms of assembly, part of the 50S ribosomal subunit. Homodimer, it forms part of the ribosomal stalk which helps the ribosome interact with GTP-bound translation factors. Forms a heptameric uL10/P0(P1)2(P1)2(P1)2 complex, where uL10/P0 forms an elongated spine to which the P1 dimers bind in a sequential fashion.

Its function is as follows. Forms part of the ribosomal stalk, playing a central role in the interaction of the ribosome with GTP-bound translation factors. The stalk complex of P.horikoshii binds to E.coli large subunits and confers on them the ability to interact with eukaryotic elongation factors. Each succesive P1 dimer bound along the P0 spine increases the GTPase activity of elongation factors and increases translation by reconsituted ribosomes. This Pyrococcus horikoshii (strain ATCC 700860 / DSM 12428 / JCM 9974 / NBRC 100139 / OT-3) protein is Large ribosomal subunit protein P1.